Reading from the N-terminus, the 75-residue chain is Protein Tlp homolog (75 aa).

It belongs to the Tlp family.

The sequence is that of Protein Tlp homolog from Clostridium acetobutylicum (strain ATCC 824 / DSM 792 / JCM 1419 / IAM 19013 / LMG 5710 / NBRC 13948 / NRRL B-527 / VKM B-1787 / 2291 / W).